The sequence spans 129 residues: Small ribosomal subunit protein bS6 (129 aa).

Basic and acidic residues predominate over residues 110–121 (FVRRDDERREDT). Positions 110–129 (FVRRDDERREDTVEAASSEE) are disordered.

It belongs to the bacterial ribosomal protein bS6 family.

Its function is as follows. Binds together with bS18 to 16S ribosomal RNA. The sequence is that of Small ribosomal subunit protein bS6 from Aeromonas salmonicida (strain A449).